Reading from the N-terminus, the 390-residue chain is Trehalose-phosphate phosphatase (390 aa).

D150 acts as the Nucleophile in catalysis. Mg(2+) is bound by residues D150, D152, and D333. Position 150-152 (150-152 (DFD)) interacts with substrate.

The protein belongs to the trehalose phosphatase family. Requires Mg(2+) as cofactor.

It carries out the reaction alpha,alpha-trehalose 6-phosphate + H2O = alpha,alpha-trehalose + phosphate. The protein operates within glycan biosynthesis; trehalose biosynthesis. Its function is as follows. Removes the phosphate from trehalose 6-phosphate to produce free trehalose. The protein is Trehalose-phosphate phosphatase (otsB) of Mycobacterium marinum (strain ATCC BAA-535 / M).